Consider the following 252-residue polypeptide: tRNA pseudouridine synthase A (252 aa).

Asp-52 serves as the catalytic Nucleophile. Tyr-111 serves as a coordination point for substrate.

This sequence belongs to the tRNA pseudouridine synthase TruA family. As to quaternary structure, homodimer.

It catalyses the reaction uridine(38/39/40) in tRNA = pseudouridine(38/39/40) in tRNA. In terms of biological role, formation of pseudouridine at positions 38, 39 and 40 in the anticodon stem and loop of transfer RNAs. The sequence is that of tRNA pseudouridine synthase A from Parabacteroides distasonis (strain ATCC 8503 / DSM 20701 / CIP 104284 / JCM 5825 / NCTC 11152).